Here is a 129-residue protein sequence, read N- to C-terminus: Glycine cleavage system H protein (129 aa).

Residues 24-106 (TYTVGITEHA…YAGGWIFKIK (83 aa)) enclose the Lipoyl-binding domain. The residue at position 65 (Lys-65) is an N6-lipoyllysine.

The protein belongs to the GcvH family. As to quaternary structure, the glycine cleavage system is composed of four proteins: P, T, L and H. Requires (R)-lipoate as cofactor.

The glycine cleavage system catalyzes the degradation of glycine. The H protein shuttles the methylamine group of glycine from the P protein to the T protein. This chain is Glycine cleavage system H protein, found in Escherichia coli O139:H28 (strain E24377A / ETEC).